The chain runs to 114 residues: Large ribosomal subunit protein uL22 (114 aa).

This sequence belongs to the universal ribosomal protein uL22 family. Part of the 50S ribosomal subunit.

Functionally, this protein binds specifically to 23S rRNA; its binding is stimulated by other ribosomal proteins, e.g. L4, L17, and L20. It is important during the early stages of 50S assembly. It makes multiple contacts with different domains of the 23S rRNA in the assembled 50S subunit and ribosome. The globular domain of the protein is located near the polypeptide exit tunnel on the outside of the subunit, while an extended beta-hairpin is found that lines the wall of the exit tunnel in the center of the 70S ribosome. The polypeptide is Large ribosomal subunit protein uL22 (Desulfitobacterium hafniense (strain Y51)).